The chain runs to 240 residues: 2,3,4,5-tetrahydropyridine-2,6-dicarboxylate N-acetyltransferase (240 aa).

It belongs to the transferase hexapeptide repeat family. DapH subfamily.

The catalysed reaction is (S)-2,3,4,5-tetrahydrodipicolinate + acetyl-CoA + H2O = L-2-acetamido-6-oxoheptanedioate + CoA. It participates in amino-acid biosynthesis; L-lysine biosynthesis via DAP pathway; LL-2,6-diaminopimelate from (S)-tetrahydrodipicolinate (acetylase route): step 1/3. Its function is as follows. Catalyzes the transfer of an acetyl group from acetyl-CoA to tetrahydrodipicolinate. The sequence is that of 2,3,4,5-tetrahydropyridine-2,6-dicarboxylate N-acetyltransferase from Bacillus mycoides (strain KBAB4) (Bacillus weihenstephanensis).